The chain runs to 943 residues: Isoleucine--tRNA ligase (943 aa).

Residues 59-69 (PYANGRIHLGH) carry the 'HIGH' region motif. Glu577 contributes to the L-isoleucyl-5'-AMP binding site. A 'KMSKS' region motif is present at residues 618-622 (KMSKS). Residue Lys621 coordinates ATP. Residues Cys906, Cys909, Cys926, and Cys929 each coordinate Zn(2+).

This sequence belongs to the class-I aminoacyl-tRNA synthetase family. IleS type 1 subfamily. Monomer. It depends on Zn(2+) as a cofactor.

The protein resides in the cytoplasm. The catalysed reaction is tRNA(Ile) + L-isoleucine + ATP = L-isoleucyl-tRNA(Ile) + AMP + diphosphate. Catalyzes the attachment of isoleucine to tRNA(Ile). As IleRS can inadvertently accommodate and process structurally similar amino acids such as valine, to avoid such errors it has two additional distinct tRNA(Ile)-dependent editing activities. One activity is designated as 'pretransfer' editing and involves the hydrolysis of activated Val-AMP. The other activity is designated 'posttransfer' editing and involves deacylation of mischarged Val-tRNA(Ile). The polypeptide is Isoleucine--tRNA ligase (Stenotrophomonas maltophilia (strain R551-3)).